Reading from the N-terminus, the 982-residue chain is Mitochondrial DNA mismatch repair protein mutS homolog (982 aa).

S698–S705 is an ATP binding site. The 47-residue stretch at C905 to R951 folds into the HNH domain.

This sequence belongs to the DNA mismatch repair MutS family.

It is found in the mitochondrion. Its function is as follows. May be involved in DNA-mismatch repair. The sequence is that of Mitochondrial DNA mismatch repair protein mutS homolog from Sarcophyton glaucum (Toadstool umbrella leather coral).